The sequence spans 876 residues: Alanine--tRNA ligase (876 aa).

Residues His-562, His-566, Cys-666, and His-670 each coordinate Zn(2+).

Belongs to the class-II aminoacyl-tRNA synthetase family. It depends on Zn(2+) as a cofactor.

The protein localises to the cytoplasm. It carries out the reaction tRNA(Ala) + L-alanine + ATP = L-alanyl-tRNA(Ala) + AMP + diphosphate. Catalyzes the attachment of alanine to tRNA(Ala) in a two-step reaction: alanine is first activated by ATP to form Ala-AMP and then transferred to the acceptor end of tRNA(Ala). Also edits incorrectly charged Ser-tRNA(Ala) and Gly-tRNA(Ala) via its editing domain. In Marinobacter nauticus (strain ATCC 700491 / DSM 11845 / VT8) (Marinobacter aquaeolei), this protein is Alanine--tRNA ligase.